A 517-amino-acid polypeptide reads, in one-letter code: Nicotine N-demethylase CYP82E4 (517 aa).

Residues 2–22 (LSPIEAIVGLVTFTFLFYFLW) form a helical membrane-spanning segment. Lys254 participates in a covalent cross-link: Glycyl lysine isopeptide (Lys-Gly) (interchain with G-Cter in ubiquitin). Residue Cys457 coordinates heme.

This sequence belongs to the cytochrome P450 family. CYP82E2 subfamily. Requires heme as cofactor. Expressed in leaves.

It is found in the membrane. The catalysed reaction is (S)-nicotine + reduced [NADPH--hemoprotein reductase] + O2 = (S)-nornicotine + formaldehyde + oxidized [NADPH--hemoprotein reductase] + H2O + H(+). It functions in the pathway alkaloid biosynthesis; nicotine biosynthesis. Functionally, involved in the biosynthesis of pyridine alkaloid natural products, leading mainly to the production of anabasine, anatabine, nicotine and nornicotine, effective deterrents against herbivores with antiparasitic and pesticide properties (neurotoxins); nornicotine serves as the precursor in the synthesis of the carcinogen compound N'-nitrosonornicotine (NNN). Catalyzes the demethylation of nicotine to form nornicotine. This Nicotiana tomentosiformis (Tobacco) protein is Nicotine N-demethylase CYP82E4.